Reading from the N-terminus, the 223-residue chain is Phosphoribosylformylglycinamidine synthase subunit PurQ (223 aa).

In terms of domain architecture, Glutamine amidotransferase type-1 spans 4–223 (KIGVITFPGT…FLSAIGTIAA (220 aa)). Cys87 serves as the catalytic Nucleophile. Catalysis depends on residues His195 and Glu197.

As to quaternary structure, part of the FGAM synthase complex composed of 1 PurL, 1 PurQ and 2 PurS subunits.

The protein resides in the cytoplasm. It carries out the reaction N(2)-formyl-N(1)-(5-phospho-beta-D-ribosyl)glycinamide + L-glutamine + ATP + H2O = 2-formamido-N(1)-(5-O-phospho-beta-D-ribosyl)acetamidine + L-glutamate + ADP + phosphate + H(+). It catalyses the reaction L-glutamine + H2O = L-glutamate + NH4(+). It functions in the pathway purine metabolism; IMP biosynthesis via de novo pathway; 5-amino-1-(5-phospho-D-ribosyl)imidazole from N(2)-formyl-N(1)-(5-phospho-D-ribosyl)glycinamide: step 1/2. In terms of biological role, part of the phosphoribosylformylglycinamidine synthase complex involved in the purines biosynthetic pathway. Catalyzes the ATP-dependent conversion of formylglycinamide ribonucleotide (FGAR) and glutamine to yield formylglycinamidine ribonucleotide (FGAM) and glutamate. The FGAM synthase complex is composed of three subunits. PurQ produces an ammonia molecule by converting glutamine to glutamate. PurL transfers the ammonia molecule to FGAR to form FGAM in an ATP-dependent manner. PurS interacts with PurQ and PurL and is thought to assist in the transfer of the ammonia molecule from PurQ to PurL. This is Phosphoribosylformylglycinamidine synthase subunit PurQ from Corynebacterium efficiens (strain DSM 44549 / YS-314 / AJ 12310 / JCM 11189 / NBRC 100395).